The chain runs to 375 residues: Alanine racemase (375 aa).

K35 serves as the catalytic Proton acceptor; specific for D-alanine. N6-(pyridoxal phosphate)lysine is present on K35. R133 serves as a coordination point for substrate. The Proton acceptor; specific for L-alanine role is filled by Y261. M309 is a substrate binding site.

It belongs to the alanine racemase family. Requires pyridoxal 5'-phosphate as cofactor.

It catalyses the reaction L-alanine = D-alanine. The protein operates within amino-acid biosynthesis; D-alanine biosynthesis; D-alanine from L-alanine: step 1/1. In terms of biological role, catalyzes the interconversion of L-alanine and D-alanine. May also act on other amino acids. The chain is Alanine racemase (alr) from Syntrophobacter fumaroxidans (strain DSM 10017 / MPOB).